We begin with the raw amino-acid sequence, 95 residues long: uncharacterized protein (95 aa).

Lys21 is a phosphate binding site. Asp44 is a binding site for Mg(2+). Asn47 is a phosphate binding site.

The protein belongs to the HAD-like hydrolase superfamily. Cof family. The cofactor is Mg(2+).

This is an uncharacterized protein from Geobacillus stearothermophilus (Bacillus stearothermophilus).